The sequence spans 177 residues: UPF0251 protein Cag_0886 (177 aa).

The segment at 147 to 177 (GGCLSDEESDEQENEQRTVGYPESEEELEIE) is disordered.

This sequence belongs to the UPF0251 family.

This chain is UPF0251 protein Cag_0886, found in Chlorobium chlorochromatii (strain CaD3).